Reading from the N-terminus, the 414-residue chain is MNELILKGERAKEASYVLMNATTSEKNDALIKMGQKLLENKDYIIAENEKDLENAMLKGTSKAMLDRLSLDEKRLEDMADGLNQLVNLNDPIGEVITMWKRPNGLQIGKQRVPMGVIGIIYEARPNVTCDAAGLCLKAGNAVILRGGSEAINSNKAIVKALCEGIKESGLPEYSLQLIENTSREIANEMMRLNEYIDVLIPRGGAGLIQAVVKNATVPVIETGVGNCHVYVDEEADFKMAEDIIINAKTSRPAVCNAEEKLLVNEKIAEEFLPKIISALREKNVEVRGDSNVMKIADDVKEATDEDWGKEYLDFIIGIKIVNNIDEAIKHINRYGSGHSEAIITNNYQNSQKFLQRVDAAAVYVNASTRFTDGCEFGFGAEIGISTQKLHARGPMGLNELTTTKYIIYGNGQIR.

It belongs to the gamma-glutamyl phosphate reductase family.

The protein localises to the cytoplasm. It catalyses the reaction L-glutamate 5-semialdehyde + phosphate + NADP(+) = L-glutamyl 5-phosphate + NADPH + H(+). Its pathway is amino-acid biosynthesis; L-proline biosynthesis; L-glutamate 5-semialdehyde from L-glutamate: step 2/2. In terms of biological role, catalyzes the NADPH-dependent reduction of L-glutamate 5-phosphate into L-glutamate 5-semialdehyde and phosphate. The product spontaneously undergoes cyclization to form 1-pyrroline-5-carboxylate. The chain is Gamma-glutamyl phosphate reductase from Clostridium botulinum (strain Alaska E43 / Type E3).